The chain runs to 93 residues: Mammaglobin-A (93 aa).

The first 18 residues, 1 to 18 (MKLLMVLMLAALSQHCYA), serve as a signal peptide directing secretion. N-linked (GlcNAc...) asparagine glycosylation is found at N53 and N68.

This sequence belongs to the secretoglobin family. Lipophilin subfamily. As to expression, mammary gland specific. Over-expressed in breast cancer.

Its subcellular location is the secreted. The sequence is that of Mammaglobin-A (SCGB2A2) from Homo sapiens (Human).